The following is a 243-amino-acid chain: 2-C-methyl-D-erythritol 4-phosphate cytidylyltransferase (243 aa).

The protein belongs to the IspD/TarI cytidylyltransferase family. IspD subfamily.

The enzyme catalyses 2-C-methyl-D-erythritol 4-phosphate + CTP + H(+) = 4-CDP-2-C-methyl-D-erythritol + diphosphate. Its pathway is isoprenoid biosynthesis; isopentenyl diphosphate biosynthesis via DXP pathway; isopentenyl diphosphate from 1-deoxy-D-xylulose 5-phosphate: step 2/6. In terms of biological role, catalyzes the formation of 4-diphosphocytidyl-2-C-methyl-D-erythritol from CTP and 2-C-methyl-D-erythritol 4-phosphate (MEP). The chain is 2-C-methyl-D-erythritol 4-phosphate cytidylyltransferase from Colwellia psychrerythraea (strain 34H / ATCC BAA-681) (Vibrio psychroerythus).